The sequence spans 60 residues: Prophage outer membrane lipoprotein RzoD (60 aa).

Positions 1–19 are cleaved as a signal peptide; the sequence is MRKLKMMLCVMMLPLVVVG. C20 carries the N-palmitoyl cysteine lipid modification. A lipid anchor (S-diacylglycerol cysteine) is attached at C20.

It belongs to the lambdalikevirus o-spanin family. In terms of assembly, homodimer; disulfide-linked. Interacts (via C-terminus) with RZ (via C-terminus). Part of the spanin complex which spans the entire periplasmic space. The spanin complex is composed of spanin, inner membrane subunit and spanin, outer membrane subunit.

Its subcellular location is the cell outer membrane. Functionally, component of the spanin complex that disrupts the outer membrane and causes cell lysis during virus exit. The spanin complex conducts the final step in cell lysis by disrupting the outer membrane after holin and endolysin action have permeabilized the inner membrane and degraded the host peptidoglycans. The chain is Prophage outer membrane lipoprotein RzoD (rzoD) from Escherichia coli (strain K12).